A 254-amino-acid polypeptide reads, in one-letter code: MDYLFISSKTDPASQNIKKHVQNYGYNVFELEKKSTQSNFSDFPDSEMYIFLSKHASESKKPTLTVHTPGNLTEDNSHGGNPEEISPCNPVFNTLMLQNINKYNEMEEYKELGFEVSFEVLHHGPTDLKTPSAFVEIGSSEEQWQIDDAAEIITNSLIDTLNSIQNSEYEEKEKIIGIGGGHYSPKFTKLALREEYYVGYLTPKHAKLSENILNQLISKQEFDFVGIDWKGLYGEDKRKYVEFFDENDISWQRV.

The segment at 61–83 (KPTLTVHTPGNLTEDNSHGGNPE) is disordered. Residues 65–74 (TVHTPGNLTE) are compositionally biased toward polar residues.

It belongs to the DtdA deacylase family. As to quaternary structure, monomer. The cofactor is Zn(2+).

It catalyses the reaction a D-aminoacyl-tRNA + H2O = a tRNA + a D-alpha-amino acid + H(+). It carries out the reaction glycyl-tRNA(Ala) + H2O = tRNA(Ala) + glycine + H(+). Its function is as follows. D-aminoacyl-tRNA deacylase with broad substrate specificity. By recycling D-aminoacyl-tRNA to D-amino acids and free tRNA molecules, this enzyme counteracts the toxicity associated with the formation of D-aminoacyl-tRNA entities in vivo. The polypeptide is D-aminoacyl-tRNA deacylase (Methanococcus maripaludis (strain C7 / ATCC BAA-1331)).